The chain runs to 338 residues: Limbic system-associated membrane protein (338 aa).

The N-terminal stretch at 1-28 is a signal peptide; it reads MVGRVQPDRKQLPLVLLRLLCLLPTGLP. 3 Ig-like C2-type domains span residues 29–122, 132–214, and 219–304; these read VRSV…PKTS, PKIS…VKVT, and PTIT…ASLV. Residues Asn40 and Asn66 are each glycosylated (N-linked (GlcNAc...) asparagine). Cys53 and Cys111 are joined by a disulfide. Tyr94 is subject to Phosphotyrosine. N-linked (GlcNAc...) asparagine glycans are attached at residues Asn136 and Asn148. Disulfide bonds link Cys153–Cys197 and Cys239–Cys290. Residues Asn279, Asn287, and Asn300 are each glycosylated (N-linked (GlcNAc...) asparagine). The GPI-anchor amidated asparagine; alternate moiety is linked to residue Asn315. Residue Asn315 is glycosylated (N-linked (GlcNAc...) asparagine; alternate). Residues 316 to 338 constitute a propeptide, removed in mature form; the sequence is GSISLAVPLWLLAASLFCLLSKC.

Belongs to the immunoglobulin superfamily. IgLON family. In terms of tissue distribution, expressed mostly by neurons comprising limbic-associated cortical and subcortical regions that function in cognition, emotion, memory, and learning.

The protein resides in the cell membrane. In terms of biological role, mediates selective neuronal growth and axon targeting. Contributes to the guidance of developing axons and remodeling of mature circuits in the limbic system. Essential for normal growth of the hippocampal mossy fiber projection. The polypeptide is Limbic system-associated membrane protein (Lsamp) (Rattus norvegicus (Rat)).